Reading from the N-terminus, the 303-residue chain is Porphobilinogen deaminase (303 aa).

Position 240 is an S-(dipyrrolylmethanemethyl)cysteine (Cys-240).

Belongs to the HMBS family. In terms of assembly, monomer. Requires dipyrromethane as cofactor.

It carries out the reaction 4 porphobilinogen + H2O = hydroxymethylbilane + 4 NH4(+). The protein operates within porphyrin-containing compound metabolism; protoporphyrin-IX biosynthesis; coproporphyrinogen-III from 5-aminolevulinate: step 2/4. Its function is as follows. Tetrapolymerization of the monopyrrole PBG into the hydroxymethylbilane pre-uroporphyrinogen in several discrete steps. This is Porphobilinogen deaminase from Stenotrophomonas maltophilia (strain R551-3).